Here is an 862-residue protein sequence, read N- to C-terminus: MSTAAIPTDAAVQAAIAEARARLADGSMRIRMAYEGHPATSTVLKGRAHLVDETIHRLWRACAMPADVALLAVGGYGRGELFPCSDVDLMVLLPDTADDAMQARLSVLLGALWDVGLEIGHSARTVAEAIDAAEQDITVQTNLLESRLLEGNRPLFEEFCRRYRALLDVRVFFKAKQLEQEKRYARYNDTPYALEPNCKESPGGLRDLQMLGWIARAAGLGRNWRDLARRRLITGAEARDLRSIERFLQHVRIRLHYLTGRSEDRLLFDYQERLASALGIEATAAKRASEVFMQRYYVNAKKVTQTNTILLQNYGVEIFPRRAGAAIVINERFQAVRELLDMREDDTFARHPSALLECFLILQQRSELKGMTARTLRALWLNRKRINAAFRADPHNRELFVAILQQKRGIVHEFRRMNQYGILSGYLPSWRRIVGQMQHDLFHVYTVDQHIMMVLRNMRRFTMGEHAHEYPLMAQLIMAFDRHWLLYVAALFHDIAKGRGGDHSKLGTIDAREFCEHHHLAREDADLVVWLVEHHLTMSHVAQKEDTSDPAVIGRFADTVGTERRLTALYLLTHADIRGTSPKVWNGWKGKLLEDLFFATRRLLRGATPQEALGLDDRQENARALLRYHGLRPGVEDALWAQLDAVYFMRHSAEEIAWHSRTLYYRPDALEPVVKARVSDADQGVQVMVFTRDQKDLFVRLTGFFGRLGFSILDAKVHTTRHGYALDSFMLQDPGNAEHYRDVITLIEHELTERLKKSAPPDRPSAGRLSRQVKHFPITPRVSILPDESGRHYILSLTAADRRGLLFAVAEVLAQNGIVLHTAKIATLGERVEDTFLLSGNGLSQDARVVKIERELLQRLHI.

Residues 1–328 are uridylyltransferase; that stretch reads MSTAAIPTDA…FPRRAGAAIV (328 aa). The tract at residues 329–685 is uridylyl-removing; it reads INERFQAVRE…ARVSDADQGV (357 aa). The 117-residue stretch at 447–563 folds into the HD domain; sequence VDQHIMMVLR…GRFADTVGTE (117 aa). 2 consecutive ACT domains span residues 686–765 and 794–862; these read QVMV…DRPS and ILSL…RLHI.

Belongs to the GlnD family. Mg(2+) serves as cofactor.

It carries out the reaction [protein-PII]-L-tyrosine + UTP = [protein-PII]-uridylyl-L-tyrosine + diphosphate. The catalysed reaction is [protein-PII]-uridylyl-L-tyrosine + H2O = [protein-PII]-L-tyrosine + UMP + H(+). Uridylyltransferase (UTase) activity is inhibited by glutamine, while glutamine activates uridylyl-removing (UR) activity. In terms of biological role, modifies, by uridylylation and deuridylylation, the PII regulatory proteins (GlnB and homologs), in response to the nitrogen status of the cell that GlnD senses through the glutamine level. Under low glutamine levels, catalyzes the conversion of the PII proteins and UTP to PII-UMP and PPi, while under higher glutamine levels, GlnD hydrolyzes PII-UMP to PII and UMP (deuridylylation). Thus, controls uridylylation state and activity of the PII proteins, and plays an important role in the regulation of nitrogen assimilation and metabolism. This is Bifunctional uridylyltransferase/uridylyl-removing enzyme from Aromatoleum aromaticum (strain DSM 19018 / LMG 30748 / EbN1) (Azoarcus sp. (strain EbN1)).